Consider the following 711-residue polypeptide: Polyribonucleotide nucleotidyltransferase (711 aa).

2 residues coordinate Mg(2+): aspartate 486 and aspartate 492. Residues 553-612 (PRIHTIKINPDKIKDVIGKGGSVIRALTEETGTTIEIEDDGTVKIAATDGEKAKHAIRRI) enclose the KH domain. The S1 motif domain occupies 622-690 (GRVYTGKVTR…RQGRIRLSIK (69 aa)). A disordered region spans residues 690 to 711 (KEATEQSQPAAAPEAPAAEQGE). Positions 694–711 (EQSQPAAAPEAPAAEQGE) are enriched in low complexity.

The protein belongs to the polyribonucleotide nucleotidyltransferase family. In terms of assembly, component of the RNA degradosome, which is a multiprotein complex involved in RNA processing and mRNA degradation. Mg(2+) is required as a cofactor.

It is found in the cytoplasm. It catalyses the reaction RNA(n+1) + phosphate = RNA(n) + a ribonucleoside 5'-diphosphate. Involved in mRNA degradation. Catalyzes the phosphorolysis of single-stranded polyribonucleotides processively in the 3'- to 5'-direction. The chain is Polyribonucleotide nucleotidyltransferase from Shigella dysenteriae serotype 1 (strain Sd197).